The chain runs to 78 residues: Large ribosomal subunit protein bL28 (78 aa).

The disordered stretch occupies residues 1 to 20 (MSRVCQVTGKGPVTGNNISH).

The protein belongs to the bacterial ribosomal protein bL28 family.

This is Large ribosomal subunit protein bL28 from Pseudomonas putida (strain ATCC 700007 / DSM 6899 / JCM 31910 / BCRC 17059 / LMG 24140 / F1).